The sequence spans 456 residues: NADH-quinone oxidoreductase subunit N (456 aa).

14 helical membrane passes run leucine 6–alanine 26, valine 45–phenylalanine 65, threonine 75–alanine 95, glutamate 97–histidine 117, alanine 118–phenylalanine 138, phenylalanine 151–alanine 171, tryptophan 181–phenylalanine 201, proline 220–leucine 240, leucine 252–alanine 272, methionine 281–alanine 301, valine 308–methionine 328, glycine 355–phenylalanine 375, glutamate 382–isoleucine 402, and leucine 426–isoleucine 446.

Belongs to the complex I subunit 2 family. As to quaternary structure, NDH-1 is composed of 14 different subunits. Subunits NuoA, H, J, K, L, M, N constitute the membrane sector of the complex.

It is found in the cell inner membrane. It carries out the reaction a quinone + NADH + 5 H(+)(in) = a quinol + NAD(+) + 4 H(+)(out). Functionally, NDH-1 shuttles electrons from NADH, via FMN and iron-sulfur (Fe-S) centers, to quinones in the respiratory chain. The immediate electron acceptor for the enzyme in this species is believed to be ubiquinone. Couples the redox reaction to proton translocation (for every two electrons transferred, four hydrogen ions are translocated across the cytoplasmic membrane), and thus conserves the redox energy in a proton gradient. The polypeptide is NADH-quinone oxidoreductase subunit N (Rhodopseudomonas palustris (strain BisA53)).